The sequence spans 732 residues: X-ray repair cross-complementing protein 5 (732 aa).

Residues 9–161 (AVVLCVDVGV…CNLKKSGISL (153 aa)) form the VWFA domain. Positions 138-165 (LSSPFSQDQLDVIICNLKKSGISLQFFL) are leucine-zipper. Lysine 195 participates in a covalent cross-link: Glycyl lysine isopeptide (Lys-Gly) (interchain with G-Cter in SUMO2). The 201-residue stretch at 253–453 (IGPNLSIKIV…CTPTEAQLSA (201 aa)) folds into the Ku domain. Serine 258 is subject to Phosphoserine. At lysine 265 the chain carries N6-acetyllysine. At serine 318 the chain carries Phosphoserine. Lysine 332 carries the N6-acetyllysine modification. Residues lysine 532 and lysine 534 each participate in a glycyl lysine isopeptide (Lys-Gly) (interchain with G-Cter in SUMO2) cross-link. A Phosphothreonine modification is found at threonine 535. Glycyl lysine isopeptide (Lys-Gly) (interchain with G-Cter in SUMO2) cross-links involve residues lysine 567 and lysine 569. A phosphoserine; by PRKDC mark is found at serine 578, serine 580, and serine 581. Position 666 is an N6-acetyllysine (lysine 666). Residues lysine 670 and lysine 689 each participate in a glycyl lysine isopeptide (Lys-Gly) (interchain with G-Cter in SUMO2) cross-link. The tract at residues 708 to 732 (PKDKAKEDTTGPEEAGDVDDLLDMI) is disordered. A Phosphothreonine; by PRKDC modification is found at threonine 716. Residues 717 to 732 (TGPEEAGDVDDLLDMI) show a composition bias toward acidic residues. The short motif at 720–728 (EEAGDVDDL) is the EEXXXDL motif element.

The protein belongs to the ku80 family. Heterodimer composed of XRCC5/Ku80 and XRCC6/Ku70. Component of the core long-range non-homologous end joining (NHEJ) complex (also named DNA-PK complex) composed of PRKDC, LIG4, XRCC4, XRCC6/Ku70, XRCC5/Ku86 and NHEJ1/XLF. Additional component of the NHEJ complex includes PAXX. Following autophosphorylation, PRKDC dissociates from DNA, leading to formation of the short-range NHEJ complex, composed of LIG4, XRCC4, XRCC6/Ku70, XRCC5/Ku86 and NHEJ1/XLF. The XRCC5-XRCC6 dimer also associates with NAA15, and this complex displays DNA binding activity towards the osteocalcin FGF response element (OCFRE). In addition, XRCC5 binds to the osteoblast-specific transcription factors MSX2 and RUNX2. Interacts with ELF3. Interacts with APLF (via KBM motif). The XRCC5/XRCC6 dimer associates in a DNA-dependent manner with APEX1. Identified in a complex with DEAF1 and XRCC6. Interacts with NR4A3; the DNA-dependent protein kinase complex DNA-PK phosphorylates and activates NR4A3 and prevents NR4A3 ubiquitinylation and degradation. Interacts with RNF138. Interacts with CYREN (via KBM motif). Interacts with WRN (via KBM motif). Interacts (via N-terminus) with HSF1 (via N-terminus); this interaction is direct and prevents XRCC5/XRCC6 heterodimeric binding and non-homologous end joining (NHEJ) repair activities induced by ionizing radiation (IR). Interacts with DHX9; this interaction occurs in a RNA-dependent manner. Part of the HDP-RNP complex composed of at least HEXIM1, PRKDC, XRCC5, XRCC6, paraspeckle proteins (SFPQ, NONO, PSPC1, RBM14, and MATR3) and NEAT1 RNA. Interacts with ERCC6. Interacts with ATF7. The XRCC5-XRCC6 dimer associates with ALKBH2. Interacts with TPRN; TPRN interacts with a number of DNA damage response proteins, is recruited to sites of DNA damage and may play a role in DNA damage repair. Interacts with ERCC6L2. ADP-ribosylated by PARP3. Post-translationally, phosphorylated on serine residues. Phosphorylation by PRKDC may enhance helicase activity. In terms of processing, sumoylated. Ubiquitinated by RNF8 via 'Lys-48'-linked ubiquitination following DNA damage, leading to its degradation and removal from DNA damage sites. Ubiquitinated by RNF138, leading to remove the Ku complex from DNA breaks.

Its subcellular location is the nucleus. The protein localises to the nucleolus. The protein resides in the chromosome. Single-stranded DNA-dependent ATP-dependent helicase that plays a key role in DNA non-homologous end joining (NHEJ) by recruiting DNA-PK to DNA. Required for double-strand break repair and V(D)J recombination. Also has a role in chromosome translocation. The DNA helicase II complex binds preferentially to fork-like ends of double-stranded DNA in a cell cycle-dependent manner. It works in the 3'-5' direction. During NHEJ, the XRCC5-XRRC6 dimer performs the recognition step: it recognizes and binds to the broken ends of the DNA and protects them from further resection. Binding to DNA may be mediated by XRCC6. The XRCC5-XRRC6 dimer acts as a regulatory subunit of the DNA-dependent protein kinase complex DNA-PK by increasing the affinity of the catalytic subunit PRKDC to DNA by 100-fold. The XRCC5-XRRC6 dimer is probably involved in stabilizing broken DNA ends and bringing them together. The assembly of the DNA-PK complex to DNA ends is required for the NHEJ ligation step. The XRCC5-XRRC6 dimer probably also acts as a 5'-deoxyribose-5-phosphate lyase (5'-dRP lyase), by catalyzing the beta-elimination of the 5' deoxyribose-5-phosphate at an abasic site near double-strand breaks. XRCC5 probably acts as the catalytic subunit of 5'-dRP activity, and allows to 'clean' the termini of abasic sites, a class of nucleotide damage commonly associated with strand breaks, before such broken ends can be joined. The XRCC5-XRRC6 dimer together with APEX1 acts as a negative regulator of transcription. In association with NAA15, the XRCC5-XRRC6 dimer binds to the osteocalcin promoter and activates osteocalcin expression. As part of the DNA-PK complex, involved in the early steps of ribosome assembly by promoting the processing of precursor rRNA into mature 18S rRNA in the small-subunit processome. Binding to U3 small nucleolar RNA, recruits PRKDC and XRCC5/Ku86 to the small-subunit processome. Plays a role in the regulation of DNA virus-mediated innate immune response by assembling into the HDP-RNP complex, a complex that serves as a platform for IRF3 phosphorylation and subsequent innate immune response activation through the cGAS-STING pathway. This chain is X-ray repair cross-complementing protein 5 (Xrcc5), found in Mus musculus (Mouse).